A 199-amino-acid polypeptide reads, in one-letter code: HTH-type transcriptional repressor NemR (199 aa).

In terms of domain architecture, HTH tetR-type spans 7-67 (HDTREHLLAT…AMLERHYAAY (61 aa)). Residues 30–49 (GLSELLKTAEVPKGSFYHYF) constitute a DNA-binding region (H-T-H motif).

In terms of biological role, involved in response to both electrophiles and reactive chlorine species (RCS). Represses the transcription of the nemRA-gloA operon by binding to the NemR box. The polypeptide is HTH-type transcriptional repressor NemR (nemR) (Escherichia coli O6:H1 (strain CFT073 / ATCC 700928 / UPEC)).